The following is an 844-amino-acid chain: Meiotically up-regulated gene 61 protein (844 aa).

2 disordered regions span residues 333–354 and 384–415; these read ENNS…PQSQ and NFGL…EISS. Residues 384 to 394 show a composition bias toward polar residues; that stretch reads NFGLEASNTST. Basic and acidic residues predominate over residues 395–407; sequence PEKKKFDSQKPDD. A helical transmembrane segment spans residues 459-479; it reads VVNSLWLVLLVVPLLGFVGFW. 605–612 provides a ligand contact to ATP; it reads AKNLNGKS. Residues 705–725 traverse the membrane as a helical segment; the sequence is VISCWRIYLLIGILAAITGTV.

Interacts with sad1.

It localises to the endoplasmic reticulum membrane. It is found in the nucleus membrane. Functionally, required for correct meiotic chromosome segregation. This chain is Meiotically up-regulated gene 61 protein (mug61), found in Schizosaccharomyces pombe (strain 972 / ATCC 24843) (Fission yeast).